The sequence spans 111 residues: Cell division protein FtsL (111 aa).

Residues 1–26 lie on the Cytoplasmic side of the membrane; that stretch reads MAQARTEFSKVAAPRKLEEMYAQRGD. A helical transmembrane segment spans residues 27–47; sequence LFPYLLAVLVLLTLVSVFHVW. Residues 48 to 111 lie on the Periplasmic side of the membrane; it reads SRVRVVDLNL…PTDQQVVVVK (64 aa). The stretch at 51 to 85 forms a coiled coil; the sequence is RVVDLNLEVAEVARQLKVAQEEQNRLKLEVASLKT.

Belongs to the FtsL family.

The protein resides in the cell inner membrane. Its function is as follows. Essential cell division protein. In Geobacter sulfurreducens (strain ATCC 51573 / DSM 12127 / PCA), this protein is Cell division protein FtsL.